We begin with the raw amino-acid sequence, 546 residues long: Thermosome subunit beta (546 aa).

The protein belongs to the TCP-1 chaperonin family. As to quaternary structure, forms a Heterooligomeric complex of two stacked eight-membered rings.

Molecular chaperone; binds unfolded polypeptides in vitro, and has a weak ATPase activity. This Thermococcus kodakarensis (strain ATCC BAA-918 / JCM 12380 / KOD1) (Pyrococcus kodakaraensis (strain KOD1)) protein is Thermosome subunit beta (thsB).